We begin with the raw amino-acid sequence, 460 residues long: Cysteine--tRNA ligase (460 aa).

A Zn(2+)-binding site is contributed by cysteine 29. Residues 31–41 (MTIYDLCHIGH) carry the 'HIGH' region motif. Residues cysteine 213, histidine 238, and glutamate 242 each contribute to the Zn(2+) site. A 'KMSKS' region motif is present at residues 270 to 274 (KMSKS). Lysine 273 lines the ATP pocket.

Belongs to the class-I aminoacyl-tRNA synthetase family. In terms of assembly, monomer. Requires Zn(2+) as cofactor.

Its subcellular location is the cytoplasm. It carries out the reaction tRNA(Cys) + L-cysteine + ATP = L-cysteinyl-tRNA(Cys) + AMP + diphosphate. The protein is Cysteine--tRNA ligase of Verminephrobacter eiseniae (strain EF01-2).